The primary structure comprises 75 residues: Protein CYSTEINE-RICH TRANSMEMBRANE MODULE 5 (75 aa).

Residues 1–29 (MSQYSQNQYAGAYPTPPVSTGPYVAPPPL) are disordered. Residues 14-29 (PTPPVSTGPYVAPPPL) show a composition bias toward pro residues. The chain crosses the membrane as a helical span at residues 52–69 (AADGFLKGCLATMLACCV).

It belongs to the CYSTM1 family. Heterodimers. Interacts with CYSTM7 and WIH1/CYSTM13. Mostly expressed in roots, stems, rosette leaves and siliques and, to a lower extent, in flowers and cauline leaves.

The protein resides in the cell membrane. Its subcellular location is the nucleus. In terms of biological role, involved in resistance to abiotic stress. The chain is Protein CYSTEINE-RICH TRANSMEMBRANE MODULE 5 from Arabidopsis thaliana (Mouse-ear cress).